The primary structure comprises 636 residues: Chaperone protein DnaK (636 aa).

Thr196 is modified (phosphothreonine; by autocatalysis). Positions 591-636 are disordered; the sequence is LAEAMYKSSSQPGAQEAPPTDGQPKPDEKGKDNVVDAEFVDVDDKK. Over residues 614-624 the composition is skewed to basic and acidic residues; the sequence is PKPDEKGKDNV.

Belongs to the heat shock protein 70 family.

In terms of biological role, acts as a chaperone. The protein is Chaperone protein DnaK of Solibacter usitatus (strain Ellin6076).